A 71-amino-acid polypeptide reads, in one-letter code: MQQPSQPTRESTKKPVPFQHEEYPCQNQQRSSTLYVLICLAIFLSKFTNQLLASLLDLLIRIVTTLQQLLT.

Residues 1 to 24 (MQQPSQPTRESTKKPVPFQHEEYP) are disordered. Residues 34–56 (LYVLICLAIFLSKFTNQLLASLL) traverse the membrane as a helical segment.

The protein belongs to the Leviviricetes lysis protein family.

It localises to the host cell inner membrane. The protein localises to the host cell outer membrane. Induces the formation of specific membrane adhesion sites between the inner and outer membranes, apparently leading to host cell lysis. Lysis may be performed via activation of host murein hydrolases. The chain is Lysis protein from Enterobacteria phage fr (Bacteriophage fr).